A 244-amino-acid polypeptide reads, in one-letter code: Tyrosine recombinase XerD-like (244 aa).

The Core-binding (CB) domain maps to 1–73 (MRDRISAFLE…ACNQFLYFLY (73 aa)). Residues 90 to 244 (AEKKTEKPEI…KTVLTLEKYR (155 aa)) enclose the Tyr recombinase domain. Catalysis depends on residues K150 and R211. The O-(3'-phospho-DNA)-tyrosine intermediate role is filled by Y243.

It belongs to the 'phage' integrase family. XerD-like subfamily.

It localises to the cytoplasm. Its function is as follows. Putative tyrosine recombinase. Not involved in the cutting and rejoining of the recombining DNA molecules on dif(SL) site. The sequence is that of Tyrosine recombinase XerD-like from Streptococcus pneumoniae serotype 2 (strain D39 / NCTC 7466).